We begin with the raw amino-acid sequence, 598 residues long: DNA primase (598 aa).

A CHC2-type zinc finger spans residues 38-62 (CPFHDEKTPSFTVSEDKQICHCFGC). Residues 260 to 341 (DEIILLEGFM…NVYVVQLPSG (82 aa)) form the Toprim domain. Mg(2+)-binding residues include Glu-266, Asp-310, and Asp-312.

Belongs to the DnaG primase family. In terms of assembly, monomer. Interacts with DnaB. It depends on Zn(2+) as a cofactor. The cofactor is Mg(2+).

It carries out the reaction ssDNA + n NTP = ssDNA/pppN(pN)n-1 hybrid + (n-1) diphosphate.. RNA polymerase that catalyzes the synthesis of short RNA molecules used as primers for DNA polymerase during DNA replication. The sequence is that of DNA primase from Staphylococcus epidermidis (strain ATCC 12228 / FDA PCI 1200).